Reading from the N-terminus, the 264-residue chain is 3-methyl-2-oxobutanoate hydroxymethyltransferase (264 aa).

2 residues coordinate Mg(2+): aspartate 45 and aspartate 84. Residues 45–46 (DS), aspartate 84, and lysine 112 contribute to the 3-methyl-2-oxobutanoate site. A Mg(2+)-binding site is contributed by glutamate 114. Residue glutamate 181 is the Proton acceptor of the active site.

It belongs to the PanB family. Homodecamer; pentamer of dimers. Mg(2+) is required as a cofactor.

Its subcellular location is the cytoplasm. It carries out the reaction 3-methyl-2-oxobutanoate + (6R)-5,10-methylene-5,6,7,8-tetrahydrofolate + H2O = 2-dehydropantoate + (6S)-5,6,7,8-tetrahydrofolate. It participates in cofactor biosynthesis; (R)-pantothenate biosynthesis; (R)-pantoate from 3-methyl-2-oxobutanoate: step 1/2. In terms of biological role, catalyzes the reversible reaction in which hydroxymethyl group from 5,10-methylenetetrahydrofolate is transferred onto alpha-ketoisovalerate to form ketopantoate. The chain is 3-methyl-2-oxobutanoate hydroxymethyltransferase from Escherichia fergusonii (strain ATCC 35469 / DSM 13698 / CCUG 18766 / IAM 14443 / JCM 21226 / LMG 7866 / NBRC 102419 / NCTC 12128 / CDC 0568-73).